The following is a 74-amino-acid chain: Fulgimotoxin (74 aa).

Gln-1 carries the pyrrolidone carboxylic acid modification. 5 cysteine pairs are disulfide-bonded: Cys-10-Cys-34, Cys-13-Cys-21, Cys-27-Cys-51, Cys-55-Cys-66, and Cys-67-Cys-72.

This sequence belongs to the three-finger toxin family. Ancestral subfamily. Boigatoxin sub-subfamily. As to quaternary structure, monomer. The N-terminus is blocked. In terms of processing, contains 5 disulfide bonds. In terms of tissue distribution, expressed by the venom gland.

The protein localises to the secreted. Reptile-specific three-finger toxin that is lethal at low doses for lizards, but not for mice. Probably acts as a neurotoxin. In Oxybelis fulgidus (Green vine snake), this protein is Fulgimotoxin.